Reading from the N-terminus, the 27-residue chain is Cruzioseptin-14 (27 aa).

As to expression, expressed by the skin glands.

It localises to the secreted. In terms of biological role, has antimicrobial activity. The protein is Cruzioseptin-14 of Cruziohyla calcarifer (Splendid leaf frog).